The chain runs to 206 residues: Small ribosomal subunit protein uS4 (206 aa).

The region spanning 96-156 is the S4 RNA-binding domain; the sequence is RRLDNVVYRM…EKSKNQLRIK (61 aa).

It belongs to the universal ribosomal protein uS4 family. In terms of assembly, part of the 30S ribosomal subunit. Contacts protein S5. The interaction surface between S4 and S5 is involved in control of translational fidelity.

Its function is as follows. One of the primary rRNA binding proteins, it binds directly to 16S rRNA where it nucleates assembly of the body of the 30S subunit. With S5 and S12 plays an important role in translational accuracy. This chain is Small ribosomal subunit protein uS4, found in Hahella chejuensis (strain KCTC 2396).